We begin with the raw amino-acid sequence, 238 residues long: IkB-like protein (238 aa).

ANK repeat units follow at residues 48 to 77 (GSSVFMWICIYGRIDFLKFLFEQESYPGEI), 86 to 115 (DGNSALHYLAEKKNHLILEEVLGYFGKNGT), 123 to 152 (NGMTPVMKAAIRGRTSNVLSLIKFGADPTQ), and 157 to 187 (RGFTAWDWAVFTGNMELVKSLNHDYQKPLYM). Positions 80–86 (PHRRDKD) match the Nuclear localization signal motif. The short motif at 202–213 (KKKPKIIITGCK) is the Nuclear localization signal element. A PxIxITxC motif; Interaction with host PPP3CA motif is present at residues 205–212 (PKIIITGC). The short motif at 227–230 (FLCV) is the FLCV motif element.

Belongs to the asfivirus A238L family. In terms of assembly, interacts with host PPIA. Interacts with host PPP3CA/Calcineurin. Interacts with host RELA/p65; interaction of the 32 kDa form with host RELA results in the formation of a stable complex with NF-kappa-B. Interacts with host PPP3R1. Interacts with host EP300; this interaction inhibits the association of host EP300 with host RELA, JUN and NFATC2. Post-translationally, the protein exists in a 28 kDa and a 32 kDa form, probably due to post-translational modifications which are neither phosphorylation, nor sumoylation.

The protein resides in the host nucleus. It localises to the host cytoplasm. In terms of biological role, I-kappa-B- (IkB)-like protein that inhibits the binding of NF-kappa-B to DNA, thereby down-regulating pro-inflammatory cytokine production. Forms a heterodimer with the NF-kappa-B subunit RELA/p65 and prevents the activation of the NF-kappa-B transcription factor. Also inhibits the host calcineurin phosphatase activity, which is required for the induction of nuclear factor of activated T cells(NFAT)-dependent immune response genes. Inhibits calcineurin function, which is required for the induction of nuclear factor of activated T cells (NFAT)-dependent immune response genes. Prevents the binding of substrates to calcineurin without affecting the phosphatase activity. Does not contain the serine residues that are phosphorylated by host IkB kinase and thus is not degraded following stimulation of the NFkB pathway. The chain is IkB-like protein (A238L) from African swine fever virus (strain Badajoz 1971 Vero-adapted) (Ba71V).